Consider the following 298-residue polypeptide: ER-bound oxygenase mpaB (298 aa).

At 1 to 24 (MDKGTSFFTTPSFSATTRAIFNTM) the chain is on the lumenal side. A helical membrane pass occupies residues 25-45 (PQWFSFAVGLLIAYPLLINSL). At 46 to 298 (RYRRLKQLQK…RLRKAMLYVE (253 aa)) the chain is on the cytoplasmic side.

It belongs to the mpaB oxygenase family.

The protein resides in the endoplasmic reticulum membrane. The enzyme catalyses 4-farnesyl-3,5-dihydroxy-6-methylphthalide + AH2 + 2 O2 = (4E,8E)-10-(4,6-dihydroxy-7-methyl-3-oxo-1,3-dihydro-2-benzofuran-5-yl)-4,8-dimethyldeca-4,8-dienoate + acetone + A + H2O + H(+). It participates in secondary metabolite biosynthesis; terpenoid biosynthesis. Its function is as follows. ER-bound oxygenase; part of the gene cluster that mediates the biosynthesis of mycophenolic acid (MPA), the first isolated antibiotic natural product in the world obtained from a culture of Penicillium brevicompactum in 1893. MpaB catalyzes the oxidative cleavage the C19-C20 double bond in farnesyl-DHMP (FDHMP) to yield FDHMP-3C via a mycophenolic aldehyde intermediate. The first step of the pathway is the synthesis of 5-methylorsellinic acid (5MOA) by the cytosolic polyketide synthase mpaC. 5MOA is then converted to the phthalide compound 5,7-dihydroxy-4,6-dimethylphthalide (DHMP) by the endoplasmic reticulum-bound cytochrome P450 monooxygenase mpaDE. MpaDE first catalyzes hydroxylation of 5-MOA to 4,6-dihydroxy-2-(hydroxymethyl)-3-methylbenzoic acid (DHMB). MpaDE then acts as a lactone synthase that catalyzes the ring closure to convert DHMB into DHMP. The next step is the prenylation of DHMP by the Golgi apparatus-associated prenyltransferase mpaA to yield farnesyl-DHMP (FDHMP). The ER-bound oxygenase mpaB then mediates the oxidative cleavage the C19-C20 double bond in FDHMP to yield FDHMP-3C via a mycophenolic aldehyde intermediate. The O-methyltransferase mpaG catalyzes the methylation of FDHMP-3C to yield MFDHMP-3C. After the cytosolic methylation of FDHMP-3C, MFDHMP-3C enters into peroxisomes probably via free diffusion due to its low molecular weight. Upon a peroxisomal CoA ligation reaction, catalyzed by a beta-oxidation component enzyme acyl-CoA ligase ACL891, MFDHMP-3C-CoA would then be restricted to peroxisomes for the following beta-oxidation pathway steps. The peroxisomal beta-oxidation machinery than converts MFDHMP-3C-CoA into MPA_CoA, via a beta-oxidation chain-shortening process. Finally mpaH acts as a peroxisomal acyl-CoA hydrolase with high substrate specificity toward MPA-CoA to release the final product MPA. The sequence is that of ER-bound oxygenase mpaB from Penicillium roqueforti (strain FM164).